Reading from the N-terminus, the 191-residue chain is Thymidylate kinase (191 aa).

ATP is bound at residue 7–14 (GIDTCGKS).

This sequence belongs to the thymidylate kinase family.

It catalyses the reaction dTMP + ATP = dTDP + ADP. In terms of biological role, phosphorylation of dTMP to form dTDP in both de novo and salvage pathways of dTTP synthesis. The chain is Thymidylate kinase from Sulfurovum sp. (strain NBC37-1).